The sequence spans 156 residues: Small ribosomal subunit protein uS7 (156 aa).

It belongs to the universal ribosomal protein uS7 family. Part of the 30S ribosomal subunit. Contacts proteins S9 and S11.

Its function is as follows. One of the primary rRNA binding proteins, it binds directly to 16S rRNA where it nucleates assembly of the head domain of the 30S subunit. Is located at the subunit interface close to the decoding center, probably blocks exit of the E-site tRNA. The polypeptide is Small ribosomal subunit protein uS7 (Mycobacterium avium (strain 104)).